Reading from the N-terminus, the 263-residue chain is Methylesterase 3 (263 aa).

S85 functions as the Acyl-ester intermediate in the catalytic mechanism. Residues D213 and H241 each act as charge relay system in the active site.

Belongs to the AB hydrolase superfamily. Methylesterase family.

The enzyme catalyses methyl (indol-3-yl)acetate + H2O = (indol-3-yl)acetate + methanol + H(+). It carries out the reaction methyl (-)-jasmonate + H2O = jasmonate + methanol + H(+). It participates in plant hormone biosynthesis. Its pathway is lipid metabolism; oxylipin biosynthesis. Methylesterase shown to have carboxylesterase activity, methyl indole-3-acetic acid (MeIAA) esterase activity and methyl jasmonate (MeJA) esterase activity in vitro. This chain is Methylesterase 3, found in Arabidopsis thaliana (Mouse-ear cress).